A 160-amino-acid polypeptide reads, in one-letter code: Glyoxalase domain-containing protein 5 (160 aa).

The region spanning 33–153 (RLDHLVLTVR…DQNLIEVSNY (121 aa)) is the VOC domain.

It belongs to the glyoxalase I family.

The polypeptide is Glyoxalase domain-containing protein 5 (glod5) (Xenopus tropicalis (Western clawed frog)).